Consider the following 387-residue polypeptide: Xylose isomerase (387 aa).

Catalysis depends on residues H54 and D57. Positions 181, 217, 220, 245, 255, 257, and 287 each coordinate Mg(2+).

Belongs to the xylose isomerase family. In terms of assembly, homotetramer. Mg(2+) is required as a cofactor.

Its subcellular location is the cytoplasm. It catalyses the reaction alpha-D-xylose = alpha-D-xylulofuranose. This is Xylose isomerase from Streptomyces coelicolor (strain ATCC BAA-471 / A3(2) / M145).